Reading from the N-terminus, the 424-residue chain is O-methyltransferase aunD (424 aa).

An S-adenosyl-L-methionine-binding site is contributed by D275. The active-site Proton acceptor is the H326.

The protein belongs to the class I-like SAM-binding methyltransferase superfamily. Cation-independent O-methyltransferase family.

Its pathway is secondary metabolite biosynthesis. O-methyltransferase; part of the gene cluster that mediates the biosynthesis of aurasperone B, a dimeric gamma-naphthopyrone. The first step in the biosynthesis of aurasperone B is the production of gamma-naphthopyrone precursor YWA1 by the non-reducing polyketide synthase albA, via condensation of one acetyl-CoA starter unit with 6 malonyl-CoA units. YWA1 is then methylated by aunE at position C-6 to yield foncesin which is further methylated at position C-8 by aunD to produce fonsecin B. A key enzyme in the biosynthetic pathway is the cytochrome P450 monooxygenase aunB which catalyzes the oxidative dimerization of fonsecin B to aurasperone B. AunB also catalyzes the oxidative dimerization of rubrofusarin B into aurasperone A. This is O-methyltransferase aunD from Aspergillus niger (strain ATCC 1015 / CBS 113.46 / FGSC A1144 / LSHB Ac4 / NCTC 3858a / NRRL 328 / USDA 3528.7).